Reading from the N-terminus, the 485-residue chain is Aspartyl/glutamyl-tRNA(Asn/Gln) amidotransferase subunit B (485 aa).

Belongs to the GatB/GatE family. GatB subfamily. Heterotrimer of A, B and C subunits.

It carries out the reaction L-glutamyl-tRNA(Gln) + L-glutamine + ATP + H2O = L-glutaminyl-tRNA(Gln) + L-glutamate + ADP + phosphate + H(+). It catalyses the reaction L-aspartyl-tRNA(Asn) + L-glutamine + ATP + H2O = L-asparaginyl-tRNA(Asn) + L-glutamate + ADP + phosphate + 2 H(+). Allows the formation of correctly charged Asn-tRNA(Asn) or Gln-tRNA(Gln) through the transamidation of misacylated Asp-tRNA(Asn) or Glu-tRNA(Gln) in organisms which lack either or both of asparaginyl-tRNA or glutaminyl-tRNA synthetases. The reaction takes place in the presence of glutamine and ATP through an activated phospho-Asp-tRNA(Asn) or phospho-Glu-tRNA(Gln). The polypeptide is Aspartyl/glutamyl-tRNA(Asn/Gln) amidotransferase subunit B (Borrelia hermsii (strain HS1 / DAH)).